The sequence spans 267 residues: MTFLEVLVVALIQGLGEVLPFGAAGLLAALPHLAAKPEGRAALSVAAHAGILLALMIYFWRDVLAMAVGLWRLAKGKPDYGSHLLLHVLAGTIPAAIVGWLVLDRASTLVGQSGAAIILILGGVLLWGCDKLGVTVRRVEHMSWVGAAGLGALQILSLVPGVSRTGITVTVARLLGWERQAAVRFSMLLAMPLILGHGVKTFWGLAHHTELVFSSDLLMAMATAGLAALIGLAGMMAWVARNTFVPFAILRIGFGIAVLGLVYFGQA.

The next 8 membrane-spanning stretches (helical) occupy residues 6-26 (VLVV…AAGL), 41-60 (AALS…IYFW), 83-103 (HLLL…WLVL), 109-129 (LVGQ…LWGC), 142-162 (MSWV…VPGV), 185-205 (FSML…FWGL), 217-237 (LLMA…GMMA), and 244-264 (FVPF…LVYF).

Belongs to the UppP family.

It is found in the cell inner membrane. It catalyses the reaction di-trans,octa-cis-undecaprenyl diphosphate + H2O = di-trans,octa-cis-undecaprenyl phosphate + phosphate + H(+). Its function is as follows. Catalyzes the dephosphorylation of undecaprenyl diphosphate (UPP). Confers resistance to bacitracin. This Paramagnetospirillum magneticum (strain ATCC 700264 / AMB-1) (Magnetospirillum magneticum) protein is Undecaprenyl-diphosphatase 1.